We begin with the raw amino-acid sequence, 448 residues long: Selenide, water dikinase 2 (448 aa).

At A2 the chain carries N-acetylalanine. Position 46 is a phosphoserine (S46). U60 is a catalytic residue. U60 is a non-standard amino acid (selenocysteine). ATP is bound at residue K63. The interval 85–107 is disordered; that stretch reads LGRGLVGGQEEASQEAGLPAGAG. S97 is modified (phosphoserine). ATP-binding positions include 118 to 120, D138, D161, and 212 to 215; these read GMD and GGQT. D120 lines the Mg(2+) pocket. D161 contacts Mg(2+). Residue D316 participates in Mg(2+) binding.

This sequence belongs to the selenophosphate synthase 1 family. Class I subfamily. As to quaternary structure, homodimer. The cofactor is Mg(2+). In terms of processing, truncated SEPHS2 proteins produced by failed UGA/Sec decoding are ubiquitinated by the CRL2(KLHDC3) complex, which recognizes the glycine (Gly) at the C-terminus of truncated SEPHS2 proteins.

It carries out the reaction hydrogenselenide + ATP + H2O = selenophosphate + AMP + phosphate + 2 H(+). Functionally, synthesizes selenophosphate from selenide and ATP. This is Selenide, water dikinase 2 (SEPHS2) from Homo sapiens (Human).